Consider the following 333-residue polypeptide: Adenosine deaminase (333 aa).

Histidine 12 and histidine 14 together coordinate Zn(2+). Residues histidine 14, aspartate 16, and glycine 170 each coordinate substrate. Histidine 197 is a binding site for Zn(2+). The Proton donor role is filled by glutamate 200. Aspartate 278 serves as a coordination point for Zn(2+). Position 279 (aspartate 279) interacts with substrate.

This sequence belongs to the metallo-dependent hydrolases superfamily. Adenosine and AMP deaminases family. Adenosine deaminase subfamily. The cofactor is Zn(2+).

It carries out the reaction adenosine + H2O + H(+) = inosine + NH4(+). The enzyme catalyses 2'-deoxyadenosine + H2O + H(+) = 2'-deoxyinosine + NH4(+). Catalyzes the hydrolytic deamination of adenosine and 2-deoxyadenosine. The protein is Adenosine deaminase of Escherichia coli O81 (strain ED1a).